A 239-amino-acid chain; its full sequence is RNA polymerase sigma factor FliA (239 aa).

The segment at 16 to 88 is sigma-70 factor domain-2; sequence LWQRYVPLVR…MLDELRSRDW (73 aa). An Interaction with polymerase core subunit RpoC motif is present at residues 43–46; the sequence is DLLQ. The tract at residues 96-166 is sigma-70 factor domain-3; the sequence is NAREVAQAMG…IELVTEEHQQ (71 aa). The sigma-70 factor domain-4 stretch occupies residues 185–233; sequence AIESLPEREQLVLTLYYQEELNLKEIGAVLEVGESRVSQLHSQAIKRLR. Residues 207–226 constitute a DNA-binding region (H-T-H motif); that stretch reads LKEIGAVLEVGESRVSQLHS.

The protein belongs to the sigma-70 factor family. FliA subfamily.

It localises to the cytoplasm. Its function is as follows. Sigma factors are initiation factors that promote the attachment of RNA polymerase to specific initiation sites and are then released. This sigma factor controls the expression of flagella-related genes. In Salmonella typhi, this protein is RNA polymerase sigma factor FliA.